Here is a 160-residue protein sequence, read N- to C-terminus: MMNNTDFLMLNNPWNKLCLVSMDFCFPLDFVSNLFWIFASKFIIVTGQIKADFKRTSWEAKAEGSLEPGRLKLQLASIVPLYSSLVTAGPASKIIILKRTSLPTVSPSNERAYLLPVSFTDLAHVFYLSYFSINAKSNSFSLDIIIALGIPHNTQAHFNH.

The helical transmembrane segment at 24 to 44 threads the bilayer; the sequence is FCFPLDFVSNLFWIFASKFII.

Belongs to the TMEM191 family.

Its subcellular location is the membrane. The protein is Transmembrane protein 191A (TMEM191A) of Homo sapiens (Human).